The primary structure comprises 211 residues: 7-carboxy-7-deazaguanine synthase (211 aa).

Residues 22 to 24 (LQG) and R37 each bind substrate. The Radical SAM core domain maps to 28-211 (NTGMPSVFVR…LQTHKLIGIE (184 aa)). Residues C41, C45, and C48 each contribute to the [4Fe-4S] cluster site. Position 50 (T50) interacts with Mg(2+). T78 lines the substrate pocket. Residues G80 and 122–124 (SPK) contribute to the S-adenosyl-L-methionine site.

It belongs to the radical SAM superfamily. 7-carboxy-7-deazaguanine synthase family. In terms of assembly, homodimer. It depends on [4Fe-4S] cluster as a cofactor. S-adenosyl-L-methionine serves as cofactor. Mg(2+) is required as a cofactor.

It catalyses the reaction 6-carboxy-5,6,7,8-tetrahydropterin + H(+) = 7-carboxy-7-deazaguanine + NH4(+). It participates in purine metabolism; 7-cyano-7-deazaguanine biosynthesis. In terms of biological role, catalyzes the complex heterocyclic radical-mediated conversion of 6-carboxy-5,6,7,8-tetrahydropterin (CPH4) to 7-carboxy-7-deazaguanine (CDG), a step common to the biosynthetic pathways of all 7-deazapurine-containing compounds. This is 7-carboxy-7-deazaguanine synthase from Haemophilus influenzae (strain ATCC 51907 / DSM 11121 / KW20 / Rd).